Reading from the N-terminus, the 309-residue chain is Porphobilinogen deaminase (309 aa).

Cys-241 carries the post-translational modification S-(dipyrrolylmethanemethyl)cysteine.

Belongs to the HMBS family. Monomer. The cofactor is dipyrromethane.

It carries out the reaction 4 porphobilinogen + H2O = hydroxymethylbilane + 4 NH4(+). The protein operates within porphyrin-containing compound metabolism; protoporphyrin-IX biosynthesis; coproporphyrinogen-III from 5-aminolevulinate: step 2/4. Tetrapolymerization of the monopyrrole PBG into the hydroxymethylbilane pre-uroporphyrinogen in several discrete steps. The sequence is that of Porphobilinogen deaminase from Bacillus thuringiensis subsp. konkukian (strain 97-27).